Reading from the N-terminus, the 20-residue chain is Cytochrome c oxidase subunit 8B, mitochondrial (20 aa).

The protein belongs to the cytochrome c oxidase VIII family. In terms of assembly, component of the cytochrome c oxidase (complex IV, CIV), a multisubunit enzyme composed of 14 subunits. The complex is composed of a catalytic core of 3 subunits MT-CO1, MT-CO2 and MT-CO3, encoded in the mitochondrial DNA, and 11 supernumerary subunits COX4I, COX5A, COX5B, COX6A, COX6B, COX6C, COX7A, COX7B, COX7C, COX8 and NDUFA4, which are encoded in the nuclear genome. The complex exists as a monomer or a dimer and forms supercomplexes (SCs) in the inner mitochondrial membrane with NADH-ubiquinone oxidoreductase (complex I, CI) and ubiquinol-cytochrome c oxidoreductase (cytochrome b-c1 complex, complex III, CIII), resulting in different assemblies (supercomplex SCI(1)III(2)IV(1) and megacomplex MCI(2)III(2)IV(2)).

Its subcellular location is the mitochondrion inner membrane. The protein operates within energy metabolism; oxidative phosphorylation. In terms of biological role, component of the cytochrome c oxidase, the last enzyme in the mitochondrial electron transport chain which drives oxidative phosphorylation. The respiratory chain contains 3 multisubunit complexes succinate dehydrogenase (complex II, CII), ubiquinol-cytochrome c oxidoreductase (cytochrome b-c1 complex, complex III, CIII) and cytochrome c oxidase (complex IV, CIV), that cooperate to transfer electrons derived from NADH and succinate to molecular oxygen, creating an electrochemical gradient over the inner membrane that drives transmembrane transport and the ATP synthase. Cytochrome c oxidase is the component of the respiratory chain that catalyzes the reduction of oxygen to water. Electrons originating from reduced cytochrome c in the intermembrane space (IMS) are transferred via the dinuclear copper A center (CU(A)) of subunit 2 and heme A of subunit 1 to the active site in subunit 1, a binuclear center (BNC) formed by heme A3 and copper B (CU(B)). The BNC reduces molecular oxygen to 2 water molecules using 4 electrons from cytochrome c in the IMS and 4 protons from the mitochondrial matrix. The protein is Cytochrome c oxidase subunit 8B, mitochondrial of Thunnus obesus (Bigeye tuna).